A 490-amino-acid polypeptide reads, in one-letter code: Serine hydroxymethyltransferase (490 aa).

(6S)-5,6,7,8-tetrahydrofolate-binding positions include L179 and G183 to L185. K291 carries the N6-(pyridoxal phosphate)lysine modification. Residue K362 forms an Isoglutamyl lysine isopeptide (Lys-Gln) (interchain with Q-Cter in protein Pup) linkage.

The protein belongs to the SHMT family. As to quaternary structure, homodimer. It depends on pyridoxal 5'-phosphate as a cofactor.

It is found in the cytoplasm. It catalyses the reaction (6R)-5,10-methylene-5,6,7,8-tetrahydrofolate + glycine + H2O = (6S)-5,6,7,8-tetrahydrofolate + L-serine. It participates in one-carbon metabolism; tetrahydrofolate interconversion. Its pathway is amino-acid biosynthesis; glycine biosynthesis; glycine from L-serine: step 1/1. Functionally, catalyzes the reversible interconversion of serine and glycine with tetrahydrofolate (THF) serving as the one-carbon carrier. This reaction serves as the major source of one-carbon groups required for the biosynthesis of purines, thymidylate, methionine, and other important biomolecules. Also exhibits THF-independent aldolase activity toward beta-hydroxyamino acids, producing glycine and aldehydes, via a retro-aldol mechanism. In Mycolicibacterium smegmatis (strain ATCC 700084 / mc(2)155) (Mycobacterium smegmatis), this protein is Serine hydroxymethyltransferase.